A 1089-amino-acid chain; its full sequence is MGTSHPAFLVLGCLLTGLSLILCQLSLPSILPNENEKVVQLNSSFSLRCFGESEVSWQYPMSEEESSDVEIRNEENNSGLFVTVLEVSSASAAHTGLYTCYYNHTQTEENELEGRHIYIYVPDPDVAFVPLGMTDYLVIVEDDDSAIIPCRTTDPETPVTLHNSEGVVPASYDSRQGFNGTFTVGPYICEATVKGKKFQTIPFNVYALKATSELDLEMEALKTVYKSGETIVVTCAVFNNEVVDLQWTYPGEVKGKGITMLEEIKVPSIKLVYTLTVPEATVKDSGDYECAARQATREVKEMKKVTISVHEKGFIEIKPTFSQLEAVNLHEVKHFVVEVRAYPPPRISWLKNNLTLIENLTEITTDVEKIQEIRYRSKLKLIRAKEEDSGHYTIVAQNEDAVKSYTFELLTQVPSSILDLVDDHHGSTGGQTVRCTAEGTPLPDIEWMICKDIKKCNNETSWTILANNVSNIITEIHSRDRSTVEGRVTFAKVEETIAVRCLAKNLLGAENRELKLVAPTLRSELTVAAAVLVLLVIVIISLIVLVVIWKQKPRYEIRWRVIESISPDGHEYIYVDPMQLPYDSRWEFPRDGLVLGRVLGSGAFGKVVEGTAYGLSRSQPVMKVAVKMLKPTARSSEKQALMSELKIMTHLGPHLNIVNLLGACTKSGPIYIITEYCFYGDLVNYLHKNRDSFLSHHPEKPKKELDIFGLNPADESTRSYVILSFENNGDYMDMKQADTTQYVPMLERKEVSKYSDIQRSLYDRPASYKKKSMLDSEVKNLLSDDNSEGLTLLDLLSFTYQVARGMEFLASKNCVHRDLAARNVLLAQGKIVKICDFGLARDIMHDSNYVSKGSTFLPVKWMAPESIFDNLYTTLSDVWSYGILLWEIFSLGGTPYPGMMVDSTFYNKIKSGYRMAKPDHATSEVYEIMVKCWNSEPEKRPSFYHLSEIVENLLPGQYKKSYEKIHLDFLKSDHPAVARMRVDSDNAYIGVTYKNEEDKLKDWEGGLDEQRLSADSGYIIPLPDIDPVPEEEDLGKRNRHSSQTSEESAIETGSSSSTFIKREDETIEDIDMMDDIGIDSSDLVEDSFL.

The first 23 residues, 1-23, serve as a signal peptide directing secretion; it reads MGTSHPAFLVLGCLLTGLSLILC. 5 consecutive Ig-like C2-type domains span residues 24–113, 117–201, 202–306, 319–410, and 414–517; these read QLSL…NELE, IYIY…FQTI, PFNV…KKVT, PTFS…FELL, and PSSI…LKLV. Residues 24–528 lie on the Extracellular side of the membrane; that stretch reads QLSLPSILPN…PTLRSELTVA (505 aa). Residues asparagine 42, asparagine 76, asparagine 103, and asparagine 179 are each glycosylated (N-linked (GlcNAc...) asparagine). A disulfide bridge connects residues cysteine 49 and cysteine 100. 2 disulfides stabilise this stretch: cysteine 150–cysteine 189 and cysteine 235–cysteine 290. N-linked (GlcNAc...) asparagine glycosylation is found at asparagine 353, asparagine 359, asparagine 458, and asparagine 468. The cysteines at positions 435 and 501 are disulfide-linked. The helical transmembrane segment at 529–549 threads the bilayer; the sequence is AAVLVLLVIVIISLIVLVVIW. Over 550-1089 the chain is Cytoplasmic; it reads KQKPRYEIRW…SSDLVEDSFL (540 aa). Residues tyrosine 572 and tyrosine 574 each carry the phosphotyrosine; by autocatalysis modification. The region spanning 593 to 954 is the Protein kinase domain; sequence LVLGRVLGSG…HLSEIVENLL (362 aa). ATP-binding positions include 599 to 607 and lysine 627; that span reads LGSGAFGKV. Phosphotyrosine; by autocatalysis occurs at positions 720, 731, 742, 754, 762, and 768. Aspartate 818 (proton acceptor) is an active-site residue. Tyrosine 849, tyrosine 988, and tyrosine 1018 each carry phosphotyrosine; by autocatalysis. The segment at 1018–1089 is disordered; it reads YIIPLPDIDP…SSDLVEDSFL (72 aa). Residues 1041–1059 show a composition bias toward polar residues; that stretch reads SSQTSEESAIETGSSSSTF. Positions 1065-1089 are enriched in acidic residues; that stretch reads ETIEDIDMMDDIGIDSSDLVEDSFL.

This sequence belongs to the protein kinase superfamily. Tyr protein kinase family. CSF-1/PDGF receptor subfamily. As to quaternary structure, interacts with homodimeric PDGFA, PDGFB and PDGFC, and with heterodimers formed by PDGFA and PDGFB. Monomer in the absence of bound ligand. Interaction with dimeric PDGFA, PDGFB and/or PDGFC leads to receptor dimerization, where both PDGFRA homodimers and heterodimers with PDGFRB are observed. Interacts (tyrosine phosphorylated) with SHB (via SH2 domain). Interacts (tyrosine phosphorylated) with SHF (via SH2 domain). Interacts (tyrosine phosphorylated) with SRC (via SH2 domain). Interacts (tyrosine phosphorylated) with PIK3R1. Interacts (tyrosine phosphorylated) with PLCG1 (via SH2 domain). Interacts (tyrosine phosphorylated) with CRK, GRB2 and GRB7. Interacts with CD248; this interaction promotes PDGF receptor signaling pathway. (Microbial infection) Interacts with human cytomegalovirus/HHV-5 envelope glycoprotein B/gB. Also interacts with the trimeric complex gH-gL-gO. Trimer-PDGFRA interaction has an inhibitory effect on PDGFRA signaling. In terms of processing, N-glycosylated. Ubiquitinated, leading to its internalization and degradation. Post-translationally, autophosphorylated on tyrosine residues upon ligand binding. Autophosphorylation occurs in trans, i.e. one subunit of the dimeric receptor phosphorylates tyrosine residues on the other subunit. Phosphorylation at Tyr-731 and Tyr-742 is important for interaction with PIK3R1. Phosphorylation at Tyr-720 and Tyr-754 is important for interaction with PTPN11. Phosphorylation at Tyr-762 is important for interaction with CRK. Phosphorylation at Tyr-572 and Tyr-574 is important for interaction with SRC and SRC family members. Phosphorylation at Tyr-988 and Tyr-1018 is important for interaction with PLCG1. Detected in platelets (at protein level). Widely expressed. Detected in brain, fibroblasts, smooth muscle, heart, and embryo. Expressed in primary and metastatic colon tumors and in normal colon tissue.

Its subcellular location is the cell membrane. It is found in the cell projection. The protein resides in the cilium. The protein localises to the golgi apparatus. The enzyme catalyses L-tyrosyl-[protein] + ATP = O-phospho-L-tyrosyl-[protein] + ADP + H(+). Present in an inactive conformation in the absence of bound ligand. Binding of PDGFA and/or PDGFB leads to dimerization and activation by autophosphorylation on tyrosine residues. Inhibited by imatinib, nilotinib and sorafenib. Its function is as follows. Tyrosine-protein kinase that acts as a cell-surface receptor for PDGFA, PDGFB and PDGFC and plays an essential role in the regulation of embryonic development, cell proliferation, survival and chemotaxis. Depending on the context, promotes or inhibits cell proliferation and cell migration. Plays an important role in the differentiation of bone marrow-derived mesenchymal stem cells. Required for normal skeleton development and cephalic closure during embryonic development. Required for normal development of the mucosa lining the gastrointestinal tract, and for recruitment of mesenchymal cells and normal development of intestinal villi. Plays a role in cell migration and chemotaxis in wound healing. Plays a role in platelet activation, secretion of agonists from platelet granules, and in thrombin-induced platelet aggregation. Binding of its cognate ligands - homodimeric PDGFA, homodimeric PDGFB, heterodimers formed by PDGFA and PDGFB or homodimeric PDGFC -leads to the activation of several signaling cascades; the response depends on the nature of the bound ligand and is modulated by the formation of heterodimers between PDGFRA and PDGFRB. Phosphorylates PIK3R1, PLCG1, and PTPN11. Activation of PLCG1 leads to the production of the cellular signaling molecules diacylglycerol and inositol 1,4,5-trisphosphate, mobilization of cytosolic Ca(2+) and the activation of protein kinase C. Phosphorylates PIK3R1, the regulatory subunit of phosphatidylinositol 3-kinase, and thereby mediates activation of the AKT1 signaling pathway. Mediates activation of HRAS and of the MAP kinases MAPK1/ERK2 and/or MAPK3/ERK1. Promotes activation of STAT family members STAT1, STAT3 and STAT5A and/or STAT5B. Receptor signaling is down-regulated by protein phosphatases that dephosphorylate the receptor and its down-stream effectors, and by rapid internalization of the activated receptor. The chain is Platelet-derived growth factor receptor alpha (PDGFRA) from Homo sapiens (Human).